The following is a 423-amino-acid chain: Probable histone-binding protein rbbD (423 aa).

WD repeat units lie at residues 119 to 159 (NHEG…LEPT), 172 to 212 (GHKK…KSDS), 222 to 262 (GHTS…KPIH), 266 to 306 (AHNS…NRLH), 310 to 350 (SHTD…EEQN), and 367 to 407 (GHTS…YNDR).

It belongs to the WD repeat RBAP46/RBAP48/MSI1 family. As to quaternary structure, probably binds directly to helix 1 of the histone fold of histone H4, a region that is not accessible when H4 is in chromatin.

It is found in the nucleus. Functionally, core histone-binding subunit that may target chromatin assembly factors, chromatin remodeling factors and histone deacetylases to their histone substrates in a manner that is regulated by nucleosomal DNA. Component of several complexes which regulate chromatin metabolism. The polypeptide is Probable histone-binding protein rbbD (rbbD) (Dictyostelium discoideum (Social amoeba)).